The primary structure comprises 158 residues: Small ribosomal subunit protein uS9 (158 aa).

It belongs to the universal ribosomal protein uS9 family.

In Rhodopseudomonas palustris (strain BisA53), this protein is Small ribosomal subunit protein uS9.